Consider the following 132-residue polypeptide: Small ribosomal subunit protein uS8c (132 aa).

It belongs to the universal ribosomal protein uS8 family. As to quaternary structure, part of the 30S ribosomal subunit.

It localises to the plastid. Its subcellular location is the chloroplast. One of the primary rRNA binding proteins, it binds directly to 16S rRNA central domain where it helps coordinate assembly of the platform of the 30S subunit. The polypeptide is Small ribosomal subunit protein uS8c (rps8) (Marchantia polymorpha (Common liverwort)).